Consider the following 203-residue polypeptide: Bone marrow stromal antigen 2 (203 aa).

At methionine 1–cysteine 26 the chain is on the cytoplasmic side. The chain crosses the membrane as a helical; Signal-anchor for type II membrane protein span at residues leucine 27 to valine 47. Topologically, residues lysine 48–serine 183 are extracellular. N-linked (GlcNAc...) asparagine glycosylation is found at asparagine 66 and asparagine 93. Positions asparagine 66–threonine 178 form a coiled coil. The GPI-anchor amidated serine moiety is linked to residue serine 183. The propeptide at alanine 184–phenylalanine 203 is removed in mature form.

Parallel homodimer; disulfide-linked. May form homotetramers under reducing conditions. Isoform 1 and isoform 2 form homodimers and also heterodimers with each other. Dimerization is essential for its antiviral activity. Interacts (via cytoplasmic domain) with ARHGAP44. Interacts with MMP14 (via C-terminal cytoplasmic tail). Interacts with LILRA4/ILT7. Interacts with RNF115. The GPI anchor is essential for its antiviral activity.

The protein localises to the golgi apparatus. It localises to the trans-Golgi network. The protein resides in the cell membrane. Its subcellular location is the late endosome. It is found in the membrane raft. The protein localises to the cytoplasm. It localises to the apical cell membrane. In terms of biological role, IFN-induced antiviral host restriction factor which efficiently blocks the release of diverse mammalian enveloped viruses by directly tethering nascent virions to the membranes of infected cells. Acts as a direct physical tether, holding virions to the cell membrane and linking virions to each other. The tethered virions can be internalized by endocytosis and subsequently degraded or they can remain on the cell surface. In either case, their spread as cell-free virions is restricted. Its target viruses belong to diverse families, including retroviridae: human immunodeficiency virus type 1 (HIV-1), mouse mammary tumor virus (MMTV) and murine leukemia virus (MLV), filoviridae: ebola virus (EBOV), arenaviridae: lassa virus (LASV), and rhabdoviridae: vesicular stomatitis virus (VSV). Can inhibit cell surface proteolytic activity of MMP14 causing decreased activation of MMP15 which results in inhibition of cell growth and migration. Can stimulate signaling by LILRA4/ILT7 and consequently provide negative feedback to the production of IFN by plasmacytoid dendritic cells in response to viral infection. Plays a role in the organization of the subapical actin cytoskeleton in polarized epithelial cells. The protein is Bone marrow stromal antigen 2 (Bst2) of Cricetulus griseus (Chinese hamster).